Consider the following 79-residue polypeptide: Translational regulator CsrA (79 aa).

It belongs to the CsrA/RsmA family. In terms of assembly, homodimer; the beta-strands of each monomer intercalate to form a hydrophobic core, while the alpha-helices form wings that extend away from the core.

The protein resides in the cytoplasm. Its function is as follows. A translational regulator that binds mRNA to regulate translation initiation and/or mRNA stability. Usually binds in the 5'-UTR at or near the Shine-Dalgarno sequence preventing ribosome-binding, thus repressing translation. Its main target seems to be the major flagellin gene, while its function is anatagonized by FliW. This chain is Translational regulator CsrA, found in Helicobacter hepaticus (strain ATCC 51449 / 3B1).